Here is a 636-residue protein sequence, read N- to C-terminus: Biosynthetic arginine decarboxylase (636 aa).

K101 is modified (N6-(pyridoxal phosphate)lysine). 286–296 (FDVGGGLAVDY) contacts substrate.

This sequence belongs to the Orn/Lys/Arg decarboxylase class-II family. SpeA subfamily. Mg(2+) is required as a cofactor. The cofactor is pyridoxal 5'-phosphate.

It catalyses the reaction L-arginine + H(+) = agmatine + CO2. It functions in the pathway amine and polyamine biosynthesis; agmatine biosynthesis; agmatine from L-arginine: step 1/1. Catalyzes the biosynthesis of agmatine from arginine. The polypeptide is Biosynthetic arginine decarboxylase (Shewanella denitrificans (strain OS217 / ATCC BAA-1090 / DSM 15013)).